Consider the following 193-residue polypeptide: Protein THEM6 (193 aa).

Residues 1–18 form the signal peptide; it reads MSWLVVLLILYVIWDVNY. Residue asparagine 149 is glycosylated (N-linked (GlcNAc...) asparagine).

It belongs to the THEM6 family.

Its subcellular location is the secreted. The protein is Protein THEM6 of Drosophila melanogaster (Fruit fly).